A 267-amino-acid chain; its full sequence is Indole-3-glycerol phosphate synthase (267 aa).

This sequence belongs to the TrpC family.

It catalyses the reaction 1-(2-carboxyphenylamino)-1-deoxy-D-ribulose 5-phosphate + H(+) = (1S,2R)-1-C-(indol-3-yl)glycerol 3-phosphate + CO2 + H2O. The protein operates within amino-acid biosynthesis; L-tryptophan biosynthesis; L-tryptophan from chorismate: step 4/5. The sequence is that of Indole-3-glycerol phosphate synthase from Cupriavidus taiwanensis (strain DSM 17343 / BCRC 17206 / CCUG 44338 / CIP 107171 / LMG 19424 / R1) (Ralstonia taiwanensis (strain LMG 19424)).